The following is a 141-amino-acid chain: Organic hydroperoxide resistance protein-like 1 (141 aa).

A disordered region spans residues 1 to 20 (MAVNYETKATNTGGRNGHVQ).

Belongs to the OsmC/Ohr family.

In Staphylococcus saprophyticus subsp. saprophyticus (strain ATCC 15305 / DSM 20229 / NCIMB 8711 / NCTC 7292 / S-41), this protein is Organic hydroperoxide resistance protein-like 1.